The chain runs to 355 residues: Erythronate-4-phosphate dehydrogenase (355 aa).

Substrate-binding residues include S45 and T66. D146 contacts NAD(+). R206 is an active-site residue. Position 229 (D229) interacts with NAD(+). The active site involves E234. H251 acts as the Proton donor in catalysis. Position 254 (G254) interacts with NAD(+). Y255 provides a ligand contact to substrate.

It belongs to the D-isomer specific 2-hydroxyacid dehydrogenase family. PdxB subfamily. As to quaternary structure, homodimer.

The protein localises to the cytoplasm. It carries out the reaction 4-phospho-D-erythronate + NAD(+) = (R)-3-hydroxy-2-oxo-4-phosphooxybutanoate + NADH + H(+). It functions in the pathway cofactor biosynthesis; pyridoxine 5'-phosphate biosynthesis; pyridoxine 5'-phosphate from D-erythrose 4-phosphate: step 2/5. In terms of biological role, catalyzes the oxidation of erythronate-4-phosphate to 3-hydroxy-2-oxo-4-phosphonooxybutanoate. This is Erythronate-4-phosphate dehydrogenase from Acinetobacter baumannii (strain ACICU).